Reading from the N-terminus, the 166-residue chain is RNA pyrophosphohydrolase (166 aa).

Residues 8–158 enclose the Nudix hydrolase domain; that stretch reads PYRSCVGMML…KRPVYERVVK (151 aa). Positions 47–68 match the Nudix box motif; the sequence is GGIDPGEDYWEAAQRELLEETN.

It belongs to the Nudix hydrolase family. RppH subfamily. A divalent metal cation serves as cofactor.

Its function is as follows. Accelerates the degradation of transcripts by removing pyrophosphate from the 5'-end of triphosphorylated RNA, leading to a more labile monophosphorylated state that can stimulate subsequent ribonuclease cleavage. This chain is RNA pyrophosphohydrolase, found in Afipia carboxidovorans (strain ATCC 49405 / DSM 1227 / KCTC 32145 / OM5) (Oligotropha carboxidovorans).